The primary structure comprises 205 residues: Imidazole glycerol phosphate synthase subunit HisH (205 aa).

The Glutamine amidotransferase type-1 domain maps to 1 to 205; it reads MVGIVNYNIG…RILKNFCEIG (205 aa). The active-site Nucleophile is the C79. Active-site residues include H186 and E188.

As to quaternary structure, heterodimer of HisH and HisF.

The protein localises to the cytoplasm. It carries out the reaction 5-[(5-phospho-1-deoxy-D-ribulos-1-ylimino)methylamino]-1-(5-phospho-beta-D-ribosyl)imidazole-4-carboxamide + L-glutamine = D-erythro-1-(imidazol-4-yl)glycerol 3-phosphate + 5-amino-1-(5-phospho-beta-D-ribosyl)imidazole-4-carboxamide + L-glutamate + H(+). It catalyses the reaction L-glutamine + H2O = L-glutamate + NH4(+). It functions in the pathway amino-acid biosynthesis; L-histidine biosynthesis; L-histidine from 5-phospho-alpha-D-ribose 1-diphosphate: step 5/9. Functionally, IGPS catalyzes the conversion of PRFAR and glutamine to IGP, AICAR and glutamate. The HisH subunit catalyzes the hydrolysis of glutamine to glutamate and ammonia as part of the synthesis of IGP and AICAR. The resulting ammonia molecule is channeled to the active site of HisF. In Wolinella succinogenes (strain ATCC 29543 / DSM 1740 / CCUG 13145 / JCM 31913 / LMG 7466 / NCTC 11488 / FDC 602W) (Vibrio succinogenes), this protein is Imidazole glycerol phosphate synthase subunit HisH.